The chain runs to 214 residues: Adenylate kinase (214 aa).

10–15 (GVGKGT) serves as a coordination point for ATP. The interval 30–59 (STGDILRAAVKELTPMGAKAKGYMDSGALV) is NMP. AMP-binding positions include threonine 31, arginine 36, 57 to 59 (ALV), 85 to 88 (GFPR), and glutamine 92. The interval 126–163 (GRRACANCGAGYHVDFAPSKVAGVCDACSGQLVQREDD) is LID. Arginine 127 serves as a coordination point for ATP. Positions 130, 133, 150, and 153 each coordinate Zn(2+). AMP-binding residues include arginine 160 and arginine 171. ATP is bound at residue glycine 199.

It belongs to the adenylate kinase family. Monomer.

The protein localises to the cytoplasm. It carries out the reaction AMP + ATP = 2 ADP. The protein operates within purine metabolism; AMP biosynthesis via salvage pathway; AMP from ADP: step 1/1. Catalyzes the reversible transfer of the terminal phosphate group between ATP and AMP. Plays an important role in cellular energy homeostasis and in adenine nucleotide metabolism. This chain is Adenylate kinase, found in Geobacter sp. (strain M21).